Here is a 97-residue protein sequence, read N- to C-terminus: uncharacterized protein (97 aa).

This is an uncharacterized protein from Haemophilus influenzae (strain ATCC 51907 / DSM 11121 / KW20 / Rd).